The sequence spans 141 residues: Nucleoside diphosphate kinase (141 aa).

ATP-binding residues include K10, F58, R86, T92, R103, and N113. H116 serves as the catalytic Pros-phosphohistidine intermediate.

It belongs to the NDK family. In terms of assembly, homotetramer. Mg(2+) is required as a cofactor.

The protein resides in the cytoplasm. The enzyme catalyses a 2'-deoxyribonucleoside 5'-diphosphate + ATP = a 2'-deoxyribonucleoside 5'-triphosphate + ADP. It carries out the reaction a ribonucleoside 5'-diphosphate + ATP = a ribonucleoside 5'-triphosphate + ADP. Major role in the synthesis of nucleoside triphosphates other than ATP. The ATP gamma phosphate is transferred to the NDP beta phosphate via a ping-pong mechanism, using a phosphorylated active-site intermediate. In Hydrogenovibrio crunogenus (strain DSM 25203 / XCL-2) (Thiomicrospira crunogena), this protein is Nucleoside diphosphate kinase.